The chain runs to 343 residues: Heat-inducible transcription repressor HrcA (343 aa).

The protein belongs to the HrcA family.

Its function is as follows. Negative regulator of class I heat shock genes (grpE-dnaK-dnaJ and groELS operons). Prevents heat-shock induction of these operons. The chain is Heat-inducible transcription repressor HrcA from Clostridium botulinum (strain Alaska E43 / Type E3).